The sequence spans 838 residues: Pentatricopeptide repeat-containing protein At4g19440, chloroplastic (838 aa).

A chloroplast-targeting transit peptide spans 1-32 (MAALLYFPKISSQMTSSHFISFSPMDLRRLSR). PPR repeat units follow at residues 238–268 (SKTT…VCKG), 272–306 (DVYL…GVAP), 307–341 (NVVT…GMEP), 342–376 (TLIT…GFPP), 377–411 (NVIV…GLSL), 412–446 (TSST…GFNV), 447–481 (NQGS…NMSP), 482–516 (GGGL…GFVV), 517–551 (DTRT…GCVM), 552–586 (DRVS…GLKP), 587–621 (DNYT…GMLP), 622–656 (DVYT…NVQP), 657–691 (NTVV…GISP), 692–726 (NSAT…GLEP), 727–761 (NVFH…NVHP), and 762–796 (NKIT…GIVP).

It belongs to the PPR family. P subfamily.

Its subcellular location is the plastid. It localises to the chloroplast. The protein is Pentatricopeptide repeat-containing protein At4g19440, chloroplastic of Arabidopsis thaliana (Mouse-ear cress).